The following is a 319-amino-acid chain: Type II methyltransferase M.RsrI (319 aa).

The span at Met-1–Gly-10 shows a compositional bias: basic residues. A disordered region spans residues Met-1–Ser-32.

The protein belongs to the N(4)/N(6)-methyltransferase family.

The catalysed reaction is a 2'-deoxyadenosine in DNA + S-adenosyl-L-methionine = an N(6)-methyl-2'-deoxyadenosine in DNA + S-adenosyl-L-homocysteine + H(+). With respect to regulation, strongly inhibited by N-ethylmaleimide, inactivated by MgCl(2) or MgSO(4). A beta subtype methylase, recognizes the double-stranded sequence 5'-GAATTC-3', methylates A-3 on both strands, and protects the DNA from cleavage by the RsrI endonuclease. This is Type II methyltransferase M.RsrI from Cereibacter sphaeroides (Rhodobacter sphaeroides).